The sequence spans 57 residues: Beta-defensin 3 (57 aa).

Residue Q16 is modified to Pyrrolidone carboxylic acid. 3 disulfide bridges follow: C24–C53, C31–C46, and C36–C54.

Belongs to the beta-defensin family. As to expression, neutrophilic granules.

It localises to the secreted. Its function is as follows. Has bactericidal activity. Active against E.coli ML35 and S.aureus 502A. This chain is Beta-defensin 3 (DEFB3), found in Bos taurus (Bovine).